Consider the following 278-residue polypeptide: MGTNDALTSTEDAVTAGANDAPLPAPPEPPRKARRATSRTSDFRVAEQPAYVLHSYPYRETSLIIDVLTRDHGRLALVAKGAKRPHSALRGVLQTFQPLLLSWSGKSEVRTLTGAEWVGGMLPLGGDGLLCGFYANELLVKFCAREDPQPPLFNHYVLTLTRLAHGEPAVQVLRSFERVLLRETGYAMALNRTVARRAVEPDRRYVFDPERGVRNADDEVPSHWPVISGQTLLDMEQDDYHRAQTVAQSKTLMRFLLNTYLGGTPLATRQILIDLQNL.

Residues 1 to 12 (MGTNDALTSTED) show a composition bias toward polar residues. The interval 1–42 (MGTNDALTSTEDAVTAGANDAPLPAPPEPPRKARRATSRTSD) is disordered.

The protein belongs to the RecO family.

Functionally, involved in DNA repair and RecF pathway recombination. The sequence is that of DNA repair protein RecO from Burkholderia lata (strain ATCC 17760 / DSM 23089 / LMG 22485 / NCIMB 9086 / R18194 / 383).